The sequence spans 231 residues: 7-cyano-7-deazaguanine synthase (231 aa).

ATP is bound at residue 8–18; it reads FSGGQDSTTCL. The Zn(2+) site is built by C188, C197, C200, and C203.

It belongs to the QueC family. Zn(2+) serves as cofactor.

It carries out the reaction 7-carboxy-7-deazaguanine + NH4(+) + ATP = 7-cyano-7-deazaguanine + ADP + phosphate + H2O + H(+). It functions in the pathway purine metabolism; 7-cyano-7-deazaguanine biosynthesis. Functionally, catalyzes the ATP-dependent conversion of 7-carboxy-7-deazaguanine (CDG) to 7-cyano-7-deazaguanine (preQ(0)). The sequence is that of 7-cyano-7-deazaguanine synthase from Erwinia tasmaniensis (strain DSM 17950 / CFBP 7177 / CIP 109463 / NCPPB 4357 / Et1/99).